Consider the following 479-residue polypeptide: Heparin cofactor 2 (479 aa).

An N-terminal signal peptide occupies residues 1–23; that stretch reads MKHPAYTLLLSLIMSMCAGSKGL. Residue asparagine 31 is glycosylated (N-linked (GlcNAc...) asparagine). Repeat copies occupy residues 55–65 and 69–79. Positions 55 to 79 are 2 X 11 AA approximate repeats, Asp/Glu-rich (acidic) (hirudin-like); that stretch reads GEEDDDYLDLEKLLSEDDDYIYVVD. Sulfotyrosine is present on residues tyrosine 61 and tyrosine 74. Residue asparagine 168 is glycosylated (N-linked (GlcNAc...) asparagine). The segment at 172–192 is glycosaminoglycan-binding site; it reads KYEVTTIHNLFRKLTHRLFRR. Asparagine 367 and asparagine 403 each carry an N-linked (GlcNAc...) asparagine glycan.

This sequence belongs to the serpin family. Post-translationally, different composition of the N-linked oligosaccharides appears to yield a 68-kDa and a 72-kDa form.

Thrombin inhibitor activated by the glycosaminoglycans, heparin or dermatan sulfate. In the presence of the latter, HC-II becomes the predominant thrombin inhibitor in place of antithrombin III (AT). This is Heparin cofactor 2 (Serpind1) from Rattus norvegicus (Rat).